Reading from the N-terminus, the 418-residue chain is Tyrosine--tRNA ligase (418 aa).

Residues 42–51 carry the 'HIGH' region motif; sequence PTSPDLHLGH. The 'KMSKS' region signature appears at 226-230; sequence KMSKS. Residue Lys229 participates in ATP binding. One can recognise an S4 RNA-binding domain in the interval 339–400; sequence VRLVALLTKS…GKRNFIKVRL (62 aa).

It belongs to the class-I aminoacyl-tRNA synthetase family. TyrS type 2 subfamily. Homodimer.

Its subcellular location is the cytoplasm. It catalyses the reaction tRNA(Tyr) + L-tyrosine + ATP = L-tyrosyl-tRNA(Tyr) + AMP + diphosphate + H(+). Functionally, catalyzes the attachment of tyrosine to tRNA(Tyr) in a two-step reaction: tyrosine is first activated by ATP to form Tyr-AMP and then transferred to the acceptor end of tRNA(Tyr). The protein is Tyrosine--tRNA ligase of Xylella fastidiosa (strain Temecula1 / ATCC 700964).